Here is a 286-residue protein sequence, read N- to C-terminus: MLRIKALAPLQTRVSCWLLVLQRGHRLASIKHVCQLSERKRQSLLYPFSDLEGHLFSQVNQAQFKIFHPSLEELRQAETLFTPSSKHVINYSTSAVRMDHVPILKQPEVCFMGRSNVGKSSLIRALFSLAPEVEVRVSKTPGHTKKLNFFTVGKAFTLVDMPGYGHMAPQDFVEMVEPYLQERHNLARTFLLVDASAGLQSTDLVAVEMFEEFNLPYVLVVTKIDRTRQGALLALALELQDFIKKQTTACFPQPFLVSSVQFSGIHLLRCFIAHVTGKQLLSAKQS.

The 174-residue stretch at 105–278 (KQPEVCFMGR…RCFIAHVTGK (174 aa)) folds into the EngB-type G domain. GTP contacts are provided by residues 113–120 (GRSNVGKS), 142–146 (GHTKK), 160–163 (DMPG), 222–225 (TKID), and 257–259 (VSS). Residues Ser120 and Thr144 each coordinate Mg(2+).

Belongs to the TRAFAC class TrmE-Era-EngA-EngB-Septin-like GTPase superfamily. EngB GTPase family. Mg(2+) serves as cofactor.

The sequence is that of GTP-binding protein 8 (gtpbp8) from Danio rerio (Zebrafish).